A 167-amino-acid polypeptide reads, in one-letter code: Large ribosomal subunit protein uL10 (167 aa).

It belongs to the universal ribosomal protein uL10 family. As to quaternary structure, part of the ribosomal stalk of the 50S ribosomal subunit. The N-terminus interacts with L11 and the large rRNA to form the base of the stalk. The C-terminus forms an elongated spine to which L12 dimers bind in a sequential fashion forming a multimeric L10(L12)X complex.

Functionally, forms part of the ribosomal stalk, playing a central role in the interaction of the ribosome with GTP-bound translation factors. The protein is Large ribosomal subunit protein uL10 of Latilactobacillus sakei subsp. sakei (strain 23K) (Lactobacillus sakei subsp. sakei).